Consider the following 166-residue polypeptide: Small ribosomal subunit protein uS5 (166 aa).

The region spanning 11–74 is the S5 DRBM domain; the sequence is LNEKLIAVNR…EKARRNMFTI (64 aa).

It belongs to the universal ribosomal protein uS5 family. In terms of assembly, part of the 30S ribosomal subunit. Contacts proteins S4 and S8.

In terms of biological role, with S4 and S12 plays an important role in translational accuracy. Its function is as follows. Located at the back of the 30S subunit body where it stabilizes the conformation of the head with respect to the body. The sequence is that of Small ribosomal subunit protein uS5 from Aliivibrio salmonicida (strain LFI1238) (Vibrio salmonicida (strain LFI1238)).